The following is a 340-amino-acid chain: Phosphoribosylformylglycinamidine cyclo-ligase (340 aa).

This sequence belongs to the AIR synthase family.

Its subcellular location is the cytoplasm. The catalysed reaction is 2-formamido-N(1)-(5-O-phospho-beta-D-ribosyl)acetamidine + ATP = 5-amino-1-(5-phospho-beta-D-ribosyl)imidazole + ADP + phosphate + H(+). It functions in the pathway purine metabolism; IMP biosynthesis via de novo pathway; 5-amino-1-(5-phospho-D-ribosyl)imidazole from N(2)-formyl-N(1)-(5-phospho-D-ribosyl)glycinamide: step 2/2. This is Phosphoribosylformylglycinamidine cyclo-ligase from Streptococcus pyogenes serotype M6 (strain ATCC BAA-946 / MGAS10394).